Here is a 477-residue protein sequence, read N- to C-terminus: Sucrose-6-phosphate hydrolase (477 aa).

Substrate is bound by residues 36-39 (WMND), glutamine 55, tryptophan 63, 98-99 (FS), 160-161 (RD), glutamate 215, and tryptophan 298. Aspartate 39 is an active-site residue.

The protein belongs to the glycosyl hydrolase 32 family.

The protein localises to the cytoplasm. The enzyme catalyses Hydrolysis of terminal non-reducing beta-D-fructofuranoside residues in beta-D-fructofuranosides.. It functions in the pathway glycan biosynthesis; sucrose metabolism. Enables the bacterium to metabolize sucrose as a sole carbon source. The polypeptide is Sucrose-6-phosphate hydrolase (cscA) (Escherichia coli).